We begin with the raw amino-acid sequence, 391 residues long: tRNA(Met) cytidine acetate ligase (391 aa).

ATP is bound by residues 7-20 (IAEY…HIYQ), glycine 101, asparagine 153, and arginine 178.

It belongs to the TmcAL family.

It localises to the cytoplasm. It carries out the reaction cytidine(34) in elongator tRNA(Met) + acetate + ATP = N(4)-acetylcytidine(34) in elongator tRNA(Met) + AMP + diphosphate. Catalyzes the formation of N(4)-acetylcytidine (ac(4)C) at the wobble position of elongator tRNA(Met), using acetate and ATP as substrates. First activates an acetate ion to form acetyladenylate (Ac-AMP) and then transfers the acetyl group to tRNA to form ac(4)C34. The chain is tRNA(Met) cytidine acetate ligase from Latilactobacillus sakei subsp. sakei (strain 23K) (Lactobacillus sakei subsp. sakei).